The chain runs to 1874 residues: Protein TIC 214 (1874 aa).

6 consecutive transmembrane segments (helical) span residues 18 to 38 (IINSVVVVGLYYGFLTTFSIG), 64 to 84 (FITGQLMMFISIYYAPLHLAL), 87 to 107 (PHTITVLALPYLLFHFFWNNH), 124 to 144 (LSIQCVFLNNLIFQLFNYFIL), 172 to 192 (VGWLIGHILFMKWLGLVLVWI), and 221 to 241 (IFSILLFITCVYYLGRIPSPI). Disordered stretches follow at residues 248–310 (ETSK…EIRV) and 1567–1624 (KTEC…NEED). The segment covering 255 to 268 (GVESEEEGDVEIET) has biased composition (acidic residues). Composition is skewed to basic and acidic residues over residues 298–310 (DSNKIDETEEIRV) and 1584–1601 (NQKEKETPADQEDLRSDA).

The protein belongs to the TIC214 family. In terms of assembly, part of the Tic complex.

Its subcellular location is the plastid. It localises to the chloroplast inner membrane. Involved in protein precursor import into chloroplasts. May be part of an intermediate translocation complex acting as a protein-conducting channel at the inner envelope. This is Protein TIC 214 from Coffea arabica (Arabian coffee).